The following is a 344-amino-acid chain: Centromere protein L (344 aa).

Phosphoserine is present on Ser39. Residue Thr43 is modified to Phosphothreonine. Ser53 carries the phosphoserine modification.

Belongs to the CENP-L/IML3 family. Component of the CENPA-CAD complex, composed of CENPI, CENPK, CENPL, CENPO, CENPP, CENPQ, CENPR and CENPS. The CENPA-CAD complex interacts with the CENPA-NAC complex, at least composed of CENPA, CENPC, CENPH, CENPM, CENPN, CENPT and CENPU.

The protein localises to the nucleus. The protein resides in the chromosome. Its subcellular location is the centromere. Its function is as follows. Component of the CENPA-CAD (nucleosome distal) complex, a complex recruited to centromeres which is involved in assembly of kinetochore proteins, mitotic progression and chromosome segregation. May be involved in incorporation of newly synthesized CENPA into centromeres via its interaction with the CENPA-NAC complex. The chain is Centromere protein L (CENPL) from Homo sapiens (Human).